The chain runs to 1755 residues: BCL-6 corepressor (1755 aa).

Residues 309 to 345 are disordered; sequence NSKQPRVPSAKAVTSGLPGDTALLLPPSPRPSPRVHL. Phosphoserine is present on residues Ser-336, Ser-340, Ser-365, and Ser-367. The interval 388 to 438 is disordered; that stretch reads LSNGKYPKAPEGGEGAQPVPGHARKTAVQDRKDGSSPPLLEKQTVTKDVTD. An N6-acetyllysine modification is found at Lys-392. Residue Ser-423 is modified to Phosphoserine. The interaction with BCL6 stretch occupies residues 498–514; it reads RSEIISTAPSSWVVPGP. The segment covering 557 to 578 has biased composition (low complexity); it reads VSGSVSSAGRPASASPAPNANA. 4 disordered regions span residues 557 to 641, 737 to 760, 773 to 794, and 815 to 844; these read VSGS…IFLS, ITKEEKPERRSRSHERARYEDPTL, TKLHPDVPTDKNLKPNPNWNQG, and AKTDTNVSKPSFAAESVGQSAEPPKPSVEP. Residues 580–594 show a composition bias toward polar residues; it reads GTKTSRSSVETTPSV. The segment covering 605–620 has biased composition (low complexity); sequence PAKHSSSTSSKGAKAS. Residues 775 to 785 are compositionally biased toward basic and acidic residues; sequence LHPDVPTDKNL. Lys-786 is covalently cross-linked (Glycyl lysine isopeptide (Lys-Gly) (interchain with G-Cter in SUMO2)). Residue Lys-872 forms a Glycyl lysine isopeptide (Lys-Gly) (interchain with G-Cter in SUMO2) linkage. Disordered stretches follow at residues 1071-1187 and 1220-1328; these read IAEQ…EDPH and QQVS…KENQ. The segment covering 1076-1107 has biased composition (basic and acidic residues); sequence ESERCEYSVGNKHRDPFEAPEDKDLPVEKYFV. Residues Ser-1127 and Ser-1139 each carry the phosphoserine modification. Positions 1166–1175 are enriched in basic and acidic residues; sequence SKDDWPEREM. Residues 1238-1252 are compositionally biased toward polar residues; sequence TQATQPEAIPQGTNI. The segment covering 1253 to 1279 has biased composition (basic and acidic residues); it reads TEEKPGRKRAEAKGNRSWSEESLKPSD. Lys-1256 is covalently cross-linked (Glycyl lysine isopeptide (Lys-Gly) (interchain with G-Cter in SUMO2)). 3 positions are modified to phosphoserine: Ser-1290, Ser-1345, and Ser-1410. A Glycyl lysine isopeptide (Lys-Gly) (interchain with G-Cter in SUMO2) cross-link involves residue Lys-1413. Residues 1430–1447 show a composition bias toward polar residues; sequence QSTQLPCSSSPQETTQSR. The segment at 1430 to 1451 is disordered; it reads QSTQLPCSSSPQETTQSRPMPP. 3 ANK repeats span residues 1462 to 1495, 1496 to 1525, and 1529 to 1558; these read AGETLLQRAARLGYEEVVLYCLENKICDVNHRDN, AGYCALHEACARGWLNIVRHLLEYGADVNC, and DGTRPLHDAVENDHLEIVRLLLSYGADPTL. The tract at residues 1634-1748 is necessary and sufficient for interaction with PCGF1; sequence SDVFEFEFSE…SSVEWLHPSD (115 aa).

This sequence belongs to the BCOR family. In terms of assembly, interacts with BCL6; the interaction is direct. Forms ternary complexes with BCL6 and SMRT/NCOR2 on selected target genes promoters; potently repress expression. Can interact with HDAC1, HDAC3 and HDAC5. Interacts with PCGF1; the interaction is direct. Interacts with KDM2B. Component of an approximately 800 kDa repressive BCOR complex at least composed of BCOR, RYBP, PCGF1, RING1, RNF2/RING2, KDM2B and SKP1. Interacts with CPNE4 (via VWFA domain). Isoform 1 may interact with MLLT3/AF9. In terms of tissue distribution, ubiquitously expressed.

The protein localises to the nucleus. Its function is as follows. Transcriptional corepressor. May specifically inhibit gene expression when recruited to promoter regions by sequence-specific DNA-binding proteins such as BCL6 and MLLT3. This repression may be mediated at least in part by histone deacetylase activities which can associate with this corepressor. Involved in the repression of TFAP2A; impairs binding of BCL6 and KDM2B to TFAP2A promoter regions. Via repression of TFAP2A acts as a negative regulator of osteo-dentiogenic capacity in adult stem cells; the function implies inhibition of methylation on histone H3 'Lys-4' (H3K4me3) and 'Lys-36' (H3K36me2). The protein is BCL-6 corepressor (BCOR) of Homo sapiens (Human).